An 817-amino-acid chain; its full sequence is Fibroblast growth factor receptor 2 (817 aa).

Positions 1-22 are cleaved as a signal peptide; the sequence is MFARGWLLGALLLMTLATVSVA. Residues 23-377 are Extracellular-facing; that stretch reads RPSLKIDLVN…ETDYPPDYVE (355 aa). Ig-like C2-type domains lie at 26–126, 159–247, and 256–358; these read LKID…VNVT, PEKM…YTLD, and PILQ…AWLT. 3 N-linked (GlcNAc...) asparagine glycosylation sites follow: N32, N84, and N124. C63 and C108 are disulfide-bonded. The tract at residues 161–178 is heparin-binding; the sequence is KMEKKLHAVPAANTVKFR. A disulfide bond links C179 and C231. N-linked (GlcNAc...) asparagine glycosylation is found at N228, N265, N297, N318, and N331. A disulfide bond links C278 and C342. Residues 378–398 traverse the membrane as a helical segment; it reads IAIYCIGVFLIACMVVIVVVC. Residues 399–817 lie on the Cytoplasmic side of the membrane; sequence RMRTSAKKPD…YQHINGGIKT (419 aa). The interval 429–465 is disordered; the sequence is TVSSDSSSSMSSSTPLVRITTRRSSAHDDPIPEYDLP. Residues 431 to 441 show a composition bias toward low complexity; sequence SSDSSSSMSSS. Position 462 is a phosphotyrosine; by autocatalysis (Y462). In terms of domain architecture, Protein kinase spans 477-766; it reads LTLGKPLGEG…LTLATNEEYL (290 aa). ATP is bound by residues 483 to 491, K513, 561 to 563, and N567; these read LGEGCFGQV and EYA. At Y582 the chain carries Phosphotyrosine; by autocatalysis. D622 acts as the Proton acceptor in catalysis. Y652, Y653, and Y765 each carry phosphotyrosine; by autocatalysis.

Belongs to the protein kinase superfamily. Tyr protein kinase family. Fibroblast growth factor receptor subfamily. Monomer. Homodimer after ligand binding. Post-translationally, autophosphorylated. Binding of FGF family members together with heparan sulfate proteoglycan or heparin promotes receptor dimerization and autophosphorylation on tyrosine residues. Autophosphorylation occurs in trans between the two FGFR molecules present in the dimer. N-glycosylated in the endoplasmic reticulum. The N-glycan chains undergo further maturation to an Endo H-resistant form in the Golgi apparatus. In terms of processing, ubiquitinated. FGFR2 is rapidly ubiquitinated after autophosphorylation, leading to internalization and degradation. Subject to degradation both in lysosomes and by the proteasome.

It is found in the cell membrane. The protein localises to the golgi apparatus. The protein resides in the cytoplasmic vesicle. It carries out the reaction L-tyrosyl-[protein] + ATP = O-phospho-L-tyrosyl-[protein] + ADP + H(+). With respect to regulation, present in an inactive conformation in the absence of bound ligand. Ligand binding leads to dimerization and activation by autophosphorylation on tyrosine residues. Tyrosine-protein kinase that acts as a cell-surface receptor for fibroblast growth factors and plays an essential role in the regulation of cell proliferation, differentiation, migration and apoptosis, and in the regulation of embryonic development. Required for normal embryonic patterning, limb bud development, lung morphogenesis, osteogenesis and skin development. Plays an essential role in the regulation of osteoblast differentiation, proliferation and apoptosis, and is required for normal skeleton development. Promotes cell proliferation in keratinocytes and immature osteoblasts, but promotes apoptosis in differentiated osteoblasts. Phosphorylates PLCG1, FRS2 and PAK4. Ligand binding leads to the activation of several signaling cascades. Activation of PLCG1 leads to the production of the cellular signaling molecules diacylglycerol and inositol 1,4,5-trisphosphate. Phosphorylation of FRS2 triggers recruitment of GRB2, GAB1, PIK3R1 and SOS1, and mediates activation of RAS, MAPK1/ERK2, MAPK3/ERK1 and the MAP kinase signaling pathway, as well as of the AKT1 signaling pathway. FGFR2 signaling is down-regulated by ubiquitination, internalization and degradation. Mutations that lead to constitutive kinase activation or impair normal FGFR2 maturation, internalization and degradation lead to aberrant signaling. Over-expressed FGFR2 promotes activation of STAT1. In Danio rerio (Zebrafish), this protein is Fibroblast growth factor receptor 2 (fgfr2).